Reading from the N-terminus, the 159-residue chain is Protein Smg homolog (159 aa).

The protein belongs to the Smg family.

This Vibrio campbellii (strain ATCC BAA-1116) protein is Protein Smg homolog.